Reading from the N-terminus, the 337-residue chain is MGKIKIGINGFGRIGRLVARVALQSEDVELVAVNDPFITTDYMTYMFKYDTVHGQWKHSDIALKDSKTLLFGEKPVTVFGIRNPEEIPWGEAGAEYVVESTGVFTDKDKAAAHLKGGAKKVVISAPSKDAPMFVVGVNEDKYTSDVNIVSNASCTTNCLAPLAKVIHDNFGIIEGLMTTVHAITATQKTVDGPSAKDWRGGRAASFNIIPSSTGAAKAVGKVLPELNGKLTGMSFRVPTVDVSVVDLTVRIEKGASYEEIKKAIKAASEGPLKGIMGYVEEDLVSTDFTGDSRSSIFDAKAGIALNDHFIKLVSWYDNEWGYSNRVVDLIRHMFKTQ.

The binding to NAD stretch occupies residues 1 to 151 (MGKIKIGING…YTSDVNIVSN (151 aa)). NAD(+) contacts are provided by residues 13–14 (RI), Asp35, and Arg82. The segment at 152–337 (ASCTTNCLAP…DLIRHMFKTQ (186 aa)) is catalytic. Residues 153-155 (SCT), Thr184, 213-214 (TG), and Arg236 each bind D-glyceraldehyde 3-phosphate. Cys154 serves as the catalytic Nucleophile. Asn318 lines the NAD(+) pocket.

The protein belongs to the glyceraldehyde-3-phosphate dehydrogenase family. In terms of assembly, homotetramer. Developing seeds, seedling roots and shoots, and embryo.

It is found in the cytoplasm. It catalyses the reaction D-glyceraldehyde 3-phosphate + phosphate + NAD(+) = (2R)-3-phospho-glyceroyl phosphate + NADH + H(+). The protein operates within carbohydrate degradation; glycolysis; pyruvate from D-glyceraldehyde 3-phosphate: step 1/5. In terms of biological role, key enzyme in glycolysis that catalyzes the first step of the pathway by converting D-glyceraldehyde 3-phosphate (G3P) into 3-phospho-D-glyceroyl phosphate. Essential for the maintenance of cellular ATP levels and carbohydrate metabolism. This chain is Glyceraldehyde-3-phosphate dehydrogenase 2, cytosolic (GAPC2), found in Zea mays (Maize).